The chain runs to 336 residues: MFYQIMRSFLFMLNPEKAHDFSIKQLKLTQGTALDFIYRQRVQQRPVQVMGLTFPNSVGLAAGLDKNGECIDAFGAMGFGHIEVGTVTPVAQPGNESPRMFRVLESDGIINRMGFNNEGVENLIKNVKESNFKGVIGINIGKNFSTPVEQGKEDYLLCMDKVYPYADYIAVNISSPNTPGLRSLQYGDALNELLAALKIRQAELQVKYNKYVPIALKIAPDLSDQEIVSIAKSLLEYKIDGLIATNTTLDRDMVKGMSHAGEAGGLSGRPLQNKSTAVIAKFAAQLKGEIPIIGVGGIDNVIAAKEKIQAGASLVQIYSGFIYHGPQLVKNIVNNI.

FMN-binding positions include 62 to 66 (AGLDK) and Thr-86. Substrate is bound at residue Lys-66. Substrate is bound at residue 111–115 (NRMGF). Residues Asn-139 and Asn-172 each coordinate FMN. A substrate-binding site is contributed by Asn-172. Ser-175 acts as the Nucleophile in catalysis. Substrate is bound at residue Asn-177. 2 residues coordinate FMN: Lys-217 and Thr-245. 246–247 (NT) lines the substrate pocket. FMN contacts are provided by residues Gly-268, Gly-297, and 318–319 (YS).

It belongs to the dihydroorotate dehydrogenase family. Type 2 subfamily. As to quaternary structure, monomer. It depends on FMN as a cofactor.

It localises to the cell membrane. The enzyme catalyses (S)-dihydroorotate + a quinone = orotate + a quinol. Its pathway is pyrimidine metabolism; UMP biosynthesis via de novo pathway; orotate from (S)-dihydroorotate (quinone route): step 1/1. In terms of biological role, catalyzes the conversion of dihydroorotate to orotate with quinone as electron acceptor. The protein is Dihydroorotate dehydrogenase (quinone) of Psychromonas ingrahamii (strain DSM 17664 / CCUG 51855 / 37).